A 222-amino-acid polypeptide reads, in one-letter code: (4-{4-[2-(gamma-L-glutamylamino)ethyl]phenoxymethyl}furan-2-yl)methanamine synthase (222 aa).

It belongs to the MfnF family.

The catalysed reaction is gamma-L-glutamyltyramine + [5-(aminomethyl)furan-3-yl]methyl diphosphate = (4-{4-[2-(gamma-L-glutamylamino)ethyl]phenoxymethyl}furan-2-yl)methanamine + diphosphate. It functions in the pathway cofactor biosynthesis; methanofuran biosynthesis. Its function is as follows. Catalyzes the condensation between 5-(aminomethyl)-3-furanmethanol diphosphate (F1-PP) and gamma-glutamyltyramine to produce APMF-Glu. This Methanococcus vannielii protein is (4-{4-[2-(gamma-L-glutamylamino)ethyl]phenoxymethyl}furan-2-yl)methanamine synthase.